The following is a 326-amino-acid chain: UDP-3-O-acylglucosamine N-acyltransferase (326 aa).

Catalysis depends on H225, which acts as the Proton acceptor.

This sequence belongs to the transferase hexapeptide repeat family. LpxD subfamily. Homotrimer.

It carries out the reaction a UDP-3-O-[(3R)-3-hydroxyacyl]-alpha-D-glucosamine + a (3R)-hydroxyacyl-[ACP] = a UDP-2-N,3-O-bis[(3R)-3-hydroxyacyl]-alpha-D-glucosamine + holo-[ACP] + H(+). The protein operates within bacterial outer membrane biogenesis; LPS lipid A biosynthesis. Its function is as follows. Catalyzes the N-acylation of UDP-3-O-acylglucosamine using 3-hydroxyacyl-ACP as the acyl donor. Is involved in the biosynthesis of lipid A, a phosphorylated glycolipid that anchors the lipopolysaccharide to the outer membrane of the cell. This chain is UDP-3-O-acylglucosamine N-acyltransferase, found in Acidovorax ebreus (strain TPSY) (Diaphorobacter sp. (strain TPSY)).